Consider the following 172-residue polypeptide: Ribosome maturation factor RimM (172 aa).

In terms of domain architecture, PRC barrel spans 96–168 (EGEFYYHQII…RVDVELMEGL (73 aa)).

This sequence belongs to the RimM family. Binds ribosomal protein uS19.

The protein resides in the cytoplasm. Its function is as follows. An accessory protein needed during the final step in the assembly of 30S ribosomal subunit, possibly for assembly of the head region. Essential for efficient processing of 16S rRNA. May be needed both before and after RbfA during the maturation of 16S rRNA. It has affinity for free ribosomal 30S subunits but not for 70S ribosomes. The polypeptide is Ribosome maturation factor RimM (Streptococcus pyogenes serotype M28 (strain MGAS6180)).